The following is an 877-amino-acid chain: Probable alpha/beta-glucosidase agdC (877 aa).

An N-terminal signal peptide occupies residues 1–14; sequence MLGSLLLLAPLAGA. N-linked (GlcNAc...) asparagine glycans are attached at residues Asn171, Asn293, and Asn373. Residue Asp422 is the Nucleophile of the active site. Glu425 is an active-site residue. A disordered region spans residues 432–476; it reads DPCTDPERYSSENNLPPAPPPVRSSSPRPLPGFPADFQPSSASRS. A compositionally biased stretch (pro residues) spans 447–463; that stretch reads PPAPPPVRSSSPRPLPG. N-linked (GlcNAc...) asparagine glycosylation is present at Asn508. Catalysis depends on Asp573, which acts as the Proton donor. 3 N-linked (GlcNAc...) asparagine glycosylation sites follow: Asn574, Asn610, and Asn744.

This sequence belongs to the glycosyl hydrolase 31 family.

The protein resides in the secreted. The enzyme catalyses Hydrolysis of terminal, non-reducing (1-&gt;4)-linked alpha-D-glucose residues with release of alpha-D-glucose.. It catalyses the reaction Hydrolysis of terminal, non-reducing beta-D-glucosyl residues with release of beta-D-glucose.. Functionally, glucosidase involved in the degradation of cellulosic biomass. Has both alpha- and beta-glucosidase activity. The protein is Probable alpha/beta-glucosidase agdC (agdC) of Aspergillus flavus (strain ATCC 200026 / FGSC A1120 / IAM 13836 / NRRL 3357 / JCM 12722 / SRRC 167).